A 968-amino-acid chain; its full sequence is uncharacterized protein (968 aa).

Disordered stretches follow at residues 124–177, 348–437, 572–595, 608–627, and 837–877; these read SSIS…FSFP, QEDS…VNDS, TTTT…QQNT, PKAS…GSSK, and KASK…KKGK. A compositionally biased stretch (polar residues) spans 131–157; sequence TIESNYLSNPSSPCQSTPILESSTPFS. 3 stretches are compositionally biased toward low complexity: residues 158-177, 352-431, and 572-593; these read QKLM…FSFP, NNNN…NCNN, and TTTT…QQQQ. Positions 841–857 are enriched in low complexity; that stretch reads DSSSSPTASSAAPGDSS.

This is an uncharacterized protein from Dictyostelium discoideum (Social amoeba).